Consider the following 140-residue polypeptide: Iron sulfur cluster assembly protein 1 (140 aa).

It belongs to the NifU family. As to quaternary structure, component of the core Fe-S cluster (ISC) assembly machinery. [2Fe-2S] cluster is required as a cofactor.

It is found in the mitosome matrix. It participates in cofactor biosynthesis; iron-sulfur cluster biosynthesis. In terms of biological role, scaffold protein for the de novo synthesis of iron-sulfur (Fe-S) clusters within mitosomes, which is required for maturation of both [2Fe-2S] and [4Fe-4S] proteins. First, a [2Fe-2S] cluster is transiently assembled on the scaffold protein ISU1. In a second step, the cluster is released from ISU1, transferred to a glutaredoxin, followed by the formation of [2Fe-2S] proteins, the synthesis of [4Fe-4S] clusters and their target-specific insertion into the recipient apoproteins. Cluster assembly on ISU1 depends on the function of the cysteine desulfurase complex NFS1-ISD11, which serves as the sulfur donor for cluster synthesis, the iron-binding protein frataxin as the putative iron donor, and the electron transfer chain comprised of ferredoxin reductase and ferredoxin, which receive their electrons from NADH. The chain is Iron sulfur cluster assembly protein 1 (ISU1) from Encephalitozoon cuniculi (strain GB-M1) (Microsporidian parasite).